A 361-amino-acid chain; its full sequence is Probable S-adenosylmethionine-dependent methyltransferase At5g38780 (361 aa).

Residues tyrosine 19, cysteine 64, asparagine 69, aspartate 106, leucine 107, serine 135, and phenylalanine 136 each contribute to the S-adenosyl-L-homocysteine site. Mg(2+)-binding residues include asparagine 174, glutamate 260, phenylalanine 262, and asparagine 263.

This sequence belongs to the methyltransferase superfamily. Type-7 methyltransferase family. As to quaternary structure, homodimer. Requires Mg(2+) as cofactor.

The sequence is that of Probable S-adenosylmethionine-dependent methyltransferase At5g38780 from Arabidopsis thaliana (Mouse-ear cress).